Consider the following 519-residue polypeptide: Probable cytosol aminopeptidase (519 aa).

2 residues coordinate Mn(2+): lysine 251 and aspartate 256. Lysine 263 is an active-site residue. Mn(2+) contacts are provided by aspartate 274, aspartate 333, and glutamate 335. Arginine 337 is a catalytic residue. Positions 487–502 (VAPAAPAAPAAPAARP) are enriched in low complexity. Residues 487–519 (VAPAAPAAPAAPAARPAAKRTGRSQGGLKRTAP) form a disordered region.

Belongs to the peptidase M17 family. It depends on Mn(2+) as a cofactor.

It localises to the cytoplasm. It carries out the reaction Release of an N-terminal amino acid, Xaa-|-Yaa-, in which Xaa is preferably Leu, but may be other amino acids including Pro although not Arg or Lys, and Yaa may be Pro. Amino acid amides and methyl esters are also readily hydrolyzed, but rates on arylamides are exceedingly low.. The catalysed reaction is Release of an N-terminal amino acid, preferentially leucine, but not glutamic or aspartic acids.. Presumably involved in the processing and regular turnover of intracellular proteins. Catalyzes the removal of unsubstituted N-terminal amino acids from various peptides. The protein is Probable cytosol aminopeptidase of Verminephrobacter eiseniae (strain EF01-2).